The chain runs to 161 residues: Lipoprotein LpqH (161 aa).

A signal peptide spans 1–21 (MNRQLRFAVAGPEILAAVVSG). Over residues 21-46 (GCSSGNKSAPSSSASSSSTSPSASSG) the composition is skewed to low complexity. A disordered region spans residues 21–49 (GCSSGNKSAPSSSASSSSTSPSASSGGAA). Residue cysteine 22 is the site of N-palmitoyl cysteine attachment. Residue cysteine 22 is the site of S-diacylglycerol cysteine attachment.

It belongs to the mycobacterial 19 kDa antigen family. Modified by Lgt on Cys-22 with an S-linked diacylglycerol with a mixture of C16, C18 and C19 fatty acids, signal peptide is removed by LspA, modifed by Lnt with an amide-linked mixture of C16 and C19 fatty acids.

It localises to the cell membrane. In terms of biological role, might be involved in ligand transport. A host TLR2 agonist, modifies host gene expression in response to pathogen. This chain is Lipoprotein LpqH (lpqH), found in Mycobacterium avium.